A 454-amino-acid polypeptide reads, in one-letter code: UPF0210 protein Cphy_2797 (454 aa).

Belongs to the UPF0210 family. As to quaternary structure, homodimer.

This chain is UPF0210 protein Cphy_2797, found in Lachnoclostridium phytofermentans (strain ATCC 700394 / DSM 18823 / ISDg) (Clostridium phytofermentans).